The sequence spans 164 residues: MTSKKRRQRGSRTHGGGTHKNRRGAGHRGGRGRAGRDKHEQHNYEPIGKHGFKRPPGAERTVAEISVQELDEGAALFVAEETAEFDDGAYHIDARDIADDADSSDITKVLGDGQVRQELHVIADAFSDTARTLIEDAGGSATLTEQGKSIAVGEDEEPNSNDEN.

Over residues 1–33 (MTSKKRRQRGSRTHGGGTHKNRRGAGHRGGRGR) the composition is skewed to basic residues. Disordered regions lie at residues 1 to 59 (MTSK…PGAE) and 137 to 164 (AGGS…NDEN). Residues 34–43 (AGRDKHEQHN) are compositionally biased toward basic and acidic residues. Over residues 153 to 164 (GEDEEPNSNDEN) the composition is skewed to acidic residues.

The protein belongs to the universal ribosomal protein uL15 family. In terms of assembly, part of the 50S ribosomal subunit.

In terms of biological role, binds to the 23S rRNA. This is Large ribosomal subunit protein uL15 from Haloquadratum walsbyi (strain DSM 16790 / HBSQ001).